The following is a 445-amino-acid chain: Phosphoglucosamine mutase (445 aa).

Ser-101 acts as the Phosphoserine intermediate in catalysis. Residues Ser-101, Asp-240, Asp-242, and Asp-244 each coordinate Mg(2+). Ser-101 is modified (phosphoserine).

It belongs to the phosphohexose mutase family. Mg(2+) is required as a cofactor. Post-translationally, activated by phosphorylation.

The catalysed reaction is alpha-D-glucosamine 1-phosphate = D-glucosamine 6-phosphate. Functionally, catalyzes the conversion of glucosamine-6-phosphate to glucosamine-1-phosphate. This Ectopseudomonas mendocina (strain ymp) (Pseudomonas mendocina) protein is Phosphoglucosamine mutase.